Reading from the N-terminus, the 432-residue chain is Trigger factor (432 aa).

Residues 161–246 form the PPIase FKBP-type domain; the sequence is DDRVTIDFVG…LKKIENMVLP (86 aa).

It belongs to the FKBP-type PPIase family. Tig subfamily.

It is found in the cytoplasm. The catalysed reaction is [protein]-peptidylproline (omega=180) = [protein]-peptidylproline (omega=0). Involved in protein export. Acts as a chaperone by maintaining the newly synthesized protein in an open conformation. Functions as a peptidyl-prolyl cis-trans isomerase. This chain is Trigger factor, found in Haemophilus influenzae (strain PittEE).